We begin with the raw amino-acid sequence, 75 residues long: uncharacterized protein (75 aa).

An N-terminal signal peptide occupies residues 1–26; the sequence is MQFLERHFSVLFPVLFFFSFYPISFA.

It localises to the secreted. This is an uncharacterized protein from Schizosaccharomyces pombe (strain 972 / ATCC 24843) (Fission yeast).